A 251-amino-acid polypeptide reads, in one-letter code: MKKTGYFLLAVIVIVAAAGVGYWKFSGNPDALREIVLEQCLPDQLQHQNPAPCAEVKPRAGYVVFKDRHGPLQYLLMPTYRINGTESPLLLEPATPNFFWLAWQARGYMSKKYGHDIPDSAVSLAINSRLGRSQDHLHIHISCIRPDVREQLDNDLTRISTRWLPLPGGLMGHEYLARRVTESELAQRSPFMMLAEEVPEARDHMGRYALAVVRQSDDSFVLLATERNLLTFNRASAEEIQDHSCAILSSR.

The helical transmembrane segment at glycine 5–phenylalanine 25 threads the bilayer.

Belongs to the Cdh family.

Its subcellular location is the cell inner membrane. The catalysed reaction is a CDP-1,2-diacyl-sn-glycerol + H2O = a 1,2-diacyl-sn-glycero-3-phosphate + CMP + 2 H(+). It participates in phospholipid metabolism; CDP-diacylglycerol degradation; phosphatidate from CDP-diacylglycerol: step 1/1. The protein is CDP-diacylglycerol pyrophosphatase (cdh) of Salmonella typhimurium (strain LT2 / SGSC1412 / ATCC 700720).